We begin with the raw amino-acid sequence, 2156 residues long: MAM and LDL-receptor class A domain-containing protein 1 (2156 aa).

The signal sequence occupies residues 1–31 (MLFFLDRMLAFPMNETFCCLWIACVFNSTLA). At 32-2076 (QQGTESFQCD…FTYAQNNTWT (2045 aa)) the chain is on the vesicular side. The LDL-receptor class A 1 domain occupies 33–68 (QGTESFQCDNGVSLPPDSICDFTDQCGDSSDERHCL). 2 disulfide bridges follow: Cys40–Cys58 and Cys52–Cys67. 2 MAM domains span residues 71–229 (ERCD…GCLP) and 268–427 (QACG…ACGQ). One can recognise an LDL-receptor class A 2 domain in the interval 433–471 (LCSADEFPCTSGQCIAKESVCDSRQDCSDESDEDPATCS). 3 cysteine pairs are disulfide-bonded: Cys434–Cys446, Cys441–Cys459, and Cys453–Cys470. MAM domains follow at residues 474-637 (LTCD…ECEI) and 652-816 (SKCD…NCTL). An N-linked (GlcNAc...) asparagine glycan is attached at Asn813. The region spanning 822 to 860 (SCEGLDHFWCRHTRACIEKLRLCDLVDDCGDRTDEVNCA) is the LDL-receptor class A 3 domain. Intrachain disulfides connect Cys823-Cys837, Cys831-Cys850, and Cys844-Cys859. Positions 863-1024 (LQCNFETGIC…DDLSFMDCTL (162 aa)) constitute an MAM 5 domain. Residue Asn1049 is glycosylated (N-linked (GlcNAc...) asparagine). Residues 1049 to 1086 (NCTDNEFICRSDGHCIEKMQKCDFKYDCPDKSDEASCV) enclose the LDL-receptor class A 4 domain. Cystine bridges form between Cys1050–Cys1063, Cys1057–Cys1076, and Cys1070–Cys1085. The MAM 6 domain occupies 1088–1256 (EVCSFEKRSL…DDISFQDCSP (169 aa)). The N-linked (GlcNAc...) asparagine glycan is linked to Asn1199. Positions 1263 to 1301 (KCTDHEFMCANKHCIAKDKLCDFVNDCADNSDETTFICR) constitute an LDL-receptor class A 5 domain. 3 disulfides stabilise this stretch: Cys1264–Cys1276, Cys1271–Cys1289, and Cys1283–Cys1300. Residues 1305 to 1465 (GRCDFEFDLC…DIVLTENCLS (161 aa)) form the MAM 7 domain. N-linked (GlcNAc...) asparagine glycosylation occurs at Asn1414. The 37-residue stretch at 1482-1518 (FCPLGYRECHNGKCYRLEQSCNFVDNCGDNTDENECG) folds into the LDL-receptor class A 6 domain. Disulfide bonds link Cys1483–Cys1495, Cys1490–Cys1508, and Cys1502–Cys1517. Residues 1519 to 1676 (SSCTFEKGWC…DDIEFKNCTT (158 aa)) form the MAM 8 domain. The 38-residue stretch at 1683–1720 (LCPEITDFLCRDKKCIASHLLCDYKPDCSDRSDEAHCA) folds into the LDL-receptor class A 7 domain. Disulfide bonds link Cys1684-Cys1697, Cys1692-Cys1710, and Cys1704-Cys1719. Residues 1727 to 1892 (GSCNFETSSG…DISFTPECVT (166 aa)) enclose the MAM 9 domain. LDL-receptor class A domains lie at 1902–1939 (PCEADQFSCIYTLQCVPLSGKCDGHEDCIDGSDEMDCP), 1946–1982 (LCSNMEFPCSTDECIPSLLLCDGVPDCHFNEDELICS), and 1985–2023 (SCSNGALVCASSNSCIPAHQRCDGFADCMDFQLDESSCS). 12 cysteine pairs are disulfide-bonded: Cys1903–Cys1916, Cys1910–Cys1929, Cys1923–Cys1938, Cys1947–Cys1959, Cys1954–Cys1972, Cys1966–Cys1981, Cys1986–Cys1999, Cys1993–Cys2012, Cys2006–Cys2022, Cys2025–Cys2036, Cys2030–Cys2045, and Cys2047–Cys2056. The region spanning 2024-2057 (ECPLNYCRNGGTCVVEKNGPMCRCRQGWKGNRCH) is the EGF-like domain. A helical transmembrane segment spans residues 2077–2097 (LLGIGLAFLMTHITVAVLCFL). Residues 2098-2156 (ANRKVPIRKTEGSGNCAFVNPVYGNWSNPEKTESSVYSFSNPLYGTTSGSLETLSHHLK) lie on the Cytoplasmic side of the membrane.

In terms of assembly, interacts with FGF19. Strongly expressed in the small intestine.

The protein localises to the cytoplasmic vesicle membrane. Functionally, enhances production and/or transport of FGF19 and thus has a role in regulation of bile acid synthesis. The sequence is that of MAM and LDL-receptor class A domain-containing protein 1 from Homo sapiens (Human).